Here is a 213-residue protein sequence, read N- to C-terminus: Redox-sensing transcriptional repressor Rex (213 aa).

Residues 18–57 (LYYRIFKRFHAEKIERANSKQIAEAIGIDSATVRRDFSYF) constitute a DNA-binding region (H-T-H motif). Residue 92–97 (GIGNMG) coordinates NAD(+).

It belongs to the transcriptional regulatory Rex family. In terms of assembly, homodimer.

Its subcellular location is the cytoplasm. Functionally, modulates transcription in response to changes in cellular NADH/NAD(+) redox state. Binds to the promoter of the aldehyde-alcohol dehydrogenase adhE gene. Functions as a redox-dependent repressor of adhE expression. This is Redox-sensing transcriptional repressor Rex from Streptococcus pneumoniae (strain ATCC BAA-255 / R6).